A 158-amino-acid polypeptide reads, in one-letter code: tRNA (cytidine(34)-2'-O)-methyltransferase (158 aa).

The S-adenosyl-L-methionine site is built by Gly-103, Ile-123, and Ser-131.

This sequence belongs to the class IV-like SAM-binding methyltransferase superfamily. RNA methyltransferase TrmH family. TrmL subfamily. As to quaternary structure, homodimer.

It localises to the cytoplasm. The catalysed reaction is cytidine(34) in tRNA + S-adenosyl-L-methionine = 2'-O-methylcytidine(34) in tRNA + S-adenosyl-L-homocysteine + H(+). It carries out the reaction 5-carboxymethylaminomethyluridine(34) in tRNA(Leu) + S-adenosyl-L-methionine = 5-carboxymethylaminomethyl-2'-O-methyluridine(34) in tRNA(Leu) + S-adenosyl-L-homocysteine + H(+). In terms of biological role, methylates the ribose at the nucleotide 34 wobble position in the two leucyl isoacceptors tRNA(Leu)(CmAA) and tRNA(Leu)(cmnm5UmAA). Catalyzes the methyl transfer from S-adenosyl-L-methionine to the 2'-OH of the wobble nucleotide. This is tRNA (cytidine(34)-2'-O)-methyltransferase from Ancylobacter novellus (strain ATCC 8093 / DSM 506 / JCM 20403 / CCM 1077 / IAM 12100 / NBRC 12443 / NCIMB 10456) (Starkeya novella).